The following is a 244-amino-acid chain: 6-carboxyhexanoate--CoA ligase (244 aa).

It belongs to the BioW family. As to quaternary structure, homodimer. Mg(2+) serves as cofactor.

The catalysed reaction is heptanedioate + ATP + CoA = 6-carboxyhexanoyl-CoA + AMP + diphosphate. It functions in the pathway metabolic intermediate metabolism; pimeloyl-CoA biosynthesis; pimeloyl-CoA from pimelate: step 1/1. Functionally, catalyzes the transformation of pimelate into pimeloyl-CoA with concomitant hydrolysis of ATP to AMP. The polypeptide is 6-carboxyhexanoate--CoA ligase (Methanococcus maripaludis (strain C7 / ATCC BAA-1331)).